The chain runs to 447 residues: Argininosuccinate synthase (447 aa).

ATP is bound by residues 17 to 25 (AFSGGLDTS) and A43. L-citrulline is bound at residue Y99. ATP contacts are provided by G129 and T131. The L-aspartate site is built by T131, N135, and D136. N135 serves as a coordination point for L-citrulline. D136 lines the ATP pocket. L-citrulline contacts are provided by R139 and S192. Residue D194 participates in ATP binding. 3 residues coordinate L-citrulline: T201, E203, and E280.

It belongs to the argininosuccinate synthase family. Type 2 subfamily. Homotetramer.

The protein localises to the cytoplasm. It catalyses the reaction L-citrulline + L-aspartate + ATP = 2-(N(omega)-L-arginino)succinate + AMP + diphosphate + H(+). It participates in amino-acid biosynthesis; L-arginine biosynthesis; L-arginine from L-ornithine and carbamoyl phosphate: step 2/3. This is Argininosuccinate synthase from Salmonella agona (strain SL483).